Here is a 148-residue protein sequence, read N- to C-terminus: MSSQEEIVIVDATNQILGRMSTHIAKLLKSGKKVYVVNAEKAIISGPRSRVLEGYSLLFTVKTMQNPYRQGIRRPRNPINIVKRTVRGMLPKNKLGKQIYRNLKAYIGIPKELEGKSMIRFDDADVSRLKGKYITVAELSRLLGGLKQ.

It belongs to the universal ribosomal protein uL13 family. Part of the 50S ribosomal subunit.

In terms of biological role, this protein is one of the early assembly proteins of the 50S ribosomal subunit, although it is not seen to bind rRNA by itself. It is important during the early stages of 50S assembly. The polypeptide is Large ribosomal subunit protein uL13 (Sulfolobus acidocaldarius (strain ATCC 33909 / DSM 639 / JCM 8929 / NBRC 15157 / NCIMB 11770)).